Consider the following 63-residue polypeptide: MNNNINHIKITQVKSAIGRKYDQRLTLVGLGLNKINKTVILKNTNSIKGMVEKVKHLLKIENM.

It belongs to the universal ribosomal protein uL30 family. In terms of assembly, part of the 50S ribosomal subunit.

The polypeptide is Large ribosomal subunit protein uL30 (Rickettsia canadensis (strain McKiel)).